A 1206-amino-acid chain; its full sequence is Translocase of chloroplast 132, chloroplastic (1206 aa).

Glycine 2 bears the N-acetylglycine mark. A coiled-coil region spans residues 13–33 (REDKKLAEDRISDEQVVKNEL). Disordered regions lie at residues 33–75 (LVRS…SDDL) and 97–119 (VGDLDETSSNEGGVKDFTAVGES). Over residues 39–49 (VRDDNEDEVFE) the composition is skewed to acidic residues. The residue at position 195 (serine 195) is a Phosphoserine. Positions 233–499 (QTEQEVEEGE…TTTEADEHDE (267 aa)) are disordered. The span at 309-324 (AYTSNIVTNASGDNEV) shows a compositional bias: polar residues. A compositionally biased stretch (low complexity) spans 325–336 (SSAVTSSPLEES). Serine 337, serine 363, and serine 398 each carry phosphoserine. Residues 357–379 (LASSPHSYPESTEVHSNSGSPGV) show a composition bias toward polar residues. Residues 403–427 (KELEKQQSSRVHVDPEITENSHVET) show a composition bias toward basic and acidic residues. The span at 430–440 (EVVSSVSPTES) shows a compositional bias: low complexity. The span at 468-492 (APQQSRVNGNGSHNQFQQAEDSTTT) shows a compositional bias: polar residues. Positions 572-801 (DFSCTIMVLG…KLQDNIPGRP (230 aa)) constitute an AIG1-type G domain. The G1 stretch occupies residues 581–588 (GKSGVGKS). Residues 584 to 589 (GVGKSA) and 603 to 608 (DAFQMG) contribute to the GTP site. Serine 588 provides a ligand contact to Mg(2+). Residues 603-606 (DAFQ) form a homodimerization region. The interval 607–611 (MGTKR) is G2. Residues 628–631 (DTPG) are G3. The segment at 666–671 (RLDMQS) is homodimerization. Residues 700-703 (THAA) are G4. Residues histidine 701 and 749–750 (EN) contribute to the GTP site. The segment at 749-751 (ENH) is G5. Positions 824–862 (QPKLPEQQYGDEEDEDDLEESSDSDEESEYDQLPPFKSL) are disordered. Residues 832–853 (YGDEEDEDDLEESSDSDEESEY) are compositionally biased toward acidic residues. A helical transmembrane segment spans residues 1182 to 1199 (LAMVAIVPLFKKLLSYYY).

It belongs to the TRAFAC class TrmE-Era-EngA-EngB-Septin-like GTPase superfamily. AIG1/Toc34/Toc159-like paraseptin GTPase family. TOC159 subfamily. In terms of assembly, homodimer. Part of the TOC core complex that includes 1 protein for the specific recognition of transit peptides surrounded by a ring composed of four proteins forming translocation channels, and four to five GTP-binding proteins providing energy. This core complex can interact with components of the TIC complex to form a larger import complex. Chloroplastic protein precursor such as prSS (precursor of the RuBisCO small subunit) interacts with these complexes. The TOC complex contains a specific subset of polar lipids such as digalactosyldiacylglyceride (DGDG), phosphatidylcholine (PC) and phosphatidylglycerol (PG). The cofactor is Mg(2+). Post-translationally, phosphorylated by KOC1. Expressed in seedlings, leaves, flowers, and roots.

The protein localises to the plastid. Its subcellular location is the chloroplast outer membrane. The protein resides in the cytoplasm. Its function is as follows. GTPase involved in protein precursor import into chloroplasts. Seems to recognize chloroplast-destined precursor proteins and regulate their presentation to the translocation channel through GTP hydrolysis. Probably specialized in the import of nuclear encoded non-photosynthetic preproteins from the cytoplasm to the chloroplast. The sequence is that of Translocase of chloroplast 132, chloroplastic from Arabidopsis thaliana (Mouse-ear cress).